The sequence spans 73 residues: uncharacterized protein (73 aa).

This is an uncharacterized protein from Saccharolobus islandicus (Sulfolobus islandicus).